The primary structure comprises 263 residues: Methylesterase 3 (263 aa).

Serine 85 acts as the Acyl-ester intermediate in catalysis. Residues aspartate 213 and histidine 241 each act as charge relay system in the active site.

The protein belongs to the AB hydrolase superfamily. Methylesterase family.

The enzyme catalyses methyl (indol-3-yl)acetate + H2O = (indol-3-yl)acetate + methanol + H(+). It carries out the reaction methyl (-)-jasmonate + H2O = jasmonate + methanol + H(+). It participates in plant hormone biosynthesis. Its pathway is lipid metabolism; oxylipin biosynthesis. Methylesterase shown to have carboxylesterase activity, methyl indole-3-acetic acid (MeIAA) esterase activity and methyl jasmonate (MeJA) esterase activity in vitro. The polypeptide is Methylesterase 3 (Arabidopsis thaliana (Mouse-ear cress)).